An 83-amino-acid polypeptide reads, in one-letter code: Polcalcin Bra r 2 (83 aa).

2 consecutive EF-hand domains span residues 5–40 (TEKA…LGSV) and 43–75 (DDIK…NRGL). Ca(2+)-binding residues include aspartate 18, asparagine 20, aspartate 22, lysine 24, glutamate 29, aspartate 53, aspartate 55, aspartate 57, tyrosine 59, and glutamate 64.

The sequence is that of Polcalcin Bra r 2 from Brassica campestris (Field mustard).